Reading from the N-terminus, the 557-residue chain is Probable protein kinase UbiB (557 aa).

The Protein kinase domain occupies 121 to 509 (AFDTTPLASA…RKLQTRVVTA (389 aa)). ATP contacts are provided by residues 127–135 (LASASIAQV) and K154. The Proton acceptor role is filled by D289. The next 2 membrane-spanning stretches (helical) occupy residues 506–526 (VVTAITGSGLLVVAAVLYGLH) and 535–555 (VPVWSWISGGAGSAALLIAWL).

The protein belongs to the ABC1 family. UbiB subfamily.

The protein resides in the cell inner membrane. Its pathway is cofactor biosynthesis; ubiquinone biosynthesis [regulation]. In terms of biological role, is probably a protein kinase regulator of UbiI activity which is involved in aerobic coenzyme Q (ubiquinone) biosynthesis. The sequence is that of Probable protein kinase UbiB from Xanthomonas campestris pv. campestris (strain 8004).